Consider the following 439-residue polypeptide: GTPase Der (439 aa).

2 EngA-type G domains span residues 2-168 and 181-357; these read ATVL…EEKG and IKVA…ASYT. GTP contacts are provided by residues 8-15, 55-59, 118-121, 187-194, 234-238, and 300-303; these read GKPNVGKS, DTCGV, NKTE, GRPNVGKS, DTAGL, and NKWD. One can recognise a KH-like domain in the interval 358 to 439; the sequence is TKVPSSAINS…PIFLKFKRSR (82 aa).

This sequence belongs to the TRAFAC class TrmE-Era-EngA-EngB-Septin-like GTPase superfamily. EngA (Der) GTPase family. As to quaternary structure, associates with the 50S ribosomal subunit.

Functionally, GTPase that plays an essential role in the late steps of ribosome biogenesis. This is GTPase Der from Thermotoga petrophila (strain ATCC BAA-488 / DSM 13995 / JCM 10881 / RKU-1).